The primary structure comprises 340 residues: Ketol-acid reductoisomerase (NADP(+)) (340 aa).

Residues Met-5 to Thr-182 form the KARI N-terminal Rossmann domain. NADP(+) contacts are provided by residues Tyr-26–Gln-29, Arg-49, Ser-53, and Asp-83–Gln-86. Residue His-108 is part of the active site. Gly-134 serves as a coordination point for NADP(+). The KARI C-terminal knotted domain occupies Thr-183 to Val-328. Asp-191, Glu-195, Glu-227, and Glu-231 together coordinate Mg(2+). Ser-252 provides a ligand contact to substrate.

The protein belongs to the ketol-acid reductoisomerase family. Requires Mg(2+) as cofactor.

The enzyme catalyses (2R)-2,3-dihydroxy-3-methylbutanoate + NADP(+) = (2S)-2-acetolactate + NADPH + H(+). It carries out the reaction (2R,3R)-2,3-dihydroxy-3-methylpentanoate + NADP(+) = (S)-2-ethyl-2-hydroxy-3-oxobutanoate + NADPH + H(+). It participates in amino-acid biosynthesis; L-isoleucine biosynthesis; L-isoleucine from 2-oxobutanoate: step 2/4. The protein operates within amino-acid biosynthesis; L-valine biosynthesis; L-valine from pyruvate: step 2/4. Functionally, involved in the biosynthesis of branched-chain amino acids (BCAA). Catalyzes an alkyl-migration followed by a ketol-acid reduction of (S)-2-acetolactate (S2AL) to yield (R)-2,3-dihydroxy-isovalerate. In the isomerase reaction, S2AL is rearranged via a Mg-dependent methyl migration to produce 3-hydroxy-3-methyl-2-ketobutyrate (HMKB). In the reductase reaction, this 2-ketoacid undergoes a metal-dependent reduction by NADPH to yield (R)-2,3-dihydroxy-isovalerate. The sequence is that of Ketol-acid reductoisomerase (NADP(+)) from Streptococcus sanguinis (strain SK36).